The sequence spans 210 residues: MPAFKPERVLVLGIGNVLWADEGFGVRCVERMAETHALPANVRLLDGGTQGLYLLPFLEEAEALIVFDAVDFGFTPGTLVTMRDDDVPAFMGAKKMSLHQTGFQDVIATAQLMGYCPSRMTLIGCQPVELEDYGGSLRPAVAGQIDFAIAEAVRELRAWGIEVTKGATISNDLVDPSLARDAYERGRPSEDEACRIGDHRFFPSAAKVRA.

Residues Glu22, Asp68, and His99 each contribute to the Ni(2+) site.

This sequence belongs to the peptidase A31 family.

Functionally, not known. Could be involved in the processing of hydrogenase. This Rhodobacter capsulatus (Rhodopseudomonas capsulata) protein is Hydrogenase expression/formation protein HupD (hupD).